The sequence spans 175 residues: Mitochondrial inner membrane protease subunit 2 (175 aa).

Residues 19–37 (FFVAVPVAVTFLDRVACVA) form a helical membrane-spanning segment. Active-site residues include Ser-43 and Lys-91.

The protein belongs to the peptidase S26 family. IMP2 subfamily. Heterodimer of 2 subunits, IMMPL1 and IMMPL2. Expressed in all tissues tested except adult liver and lung.

The protein localises to the mitochondrion inner membrane. In terms of biological role, catalyzes the removal of transit peptides required for the targeting of proteins from the mitochondrial matrix, across the inner membrane, into the inter-membrane space. Known to process the nuclear encoded protein DIABLO. This is Mitochondrial inner membrane protease subunit 2 (IMMP2L) from Homo sapiens (Human).